The primary structure comprises 784 residues: uncharacterized protein (784 aa).

A 3'-5' exonuclease domain is found at 422-619 (IRIVQNEQDL…EVFQKIVEVV (198 aa)).

This is an uncharacterized protein from Caenorhabditis elegans.